Consider the following 347-residue polypeptide: A-type ATP synthase subunit C (347 aa).

The protein belongs to the V-ATPase V0D/AC39 subunit family. In terms of assembly, has multiple subunits with at least A(3), B(3), C, D, E, F, H, I and proteolipid K(x).

Its subcellular location is the cell membrane. Functionally, component of the A-type ATP synthase that produces ATP from ADP in the presence of a proton gradient across the membrane. This chain is A-type ATP synthase subunit C, found in Haloquadratum walsbyi (strain DSM 16790 / HBSQ001).